The following is a 294-amino-acid chain: ATP phosphoribosyltransferase (294 aa).

Belongs to the ATP phosphoribosyltransferase family. Long subfamily. It depends on Mg(2+) as a cofactor.

It is found in the cytoplasm. The enzyme catalyses 1-(5-phospho-beta-D-ribosyl)-ATP + diphosphate = 5-phospho-alpha-D-ribose 1-diphosphate + ATP. It participates in amino-acid biosynthesis; L-histidine biosynthesis; L-histidine from 5-phospho-alpha-D-ribose 1-diphosphate: step 1/9. Feedback inhibited by histidine. Functionally, catalyzes the condensation of ATP and 5-phosphoribose 1-diphosphate to form N'-(5'-phosphoribosyl)-ATP (PR-ATP). Has a crucial role in the pathway because the rate of histidine biosynthesis seems to be controlled primarily by regulation of HisG enzymatic activity. The polypeptide is ATP phosphoribosyltransferase (Chlorobium phaeobacteroides (strain DSM 266 / SMG 266 / 2430)).